The primary structure comprises 335 residues: Glucokinase (335 aa).

Alanine 11–threonine 16 lines the ATP pocket.

Belongs to the bacterial glucokinase family.

Its subcellular location is the cytoplasm. The enzyme catalyses D-glucose + ATP = D-glucose 6-phosphate + ADP + H(+). This chain is Glucokinase, found in Xanthomonas axonopodis pv. citri (strain 306).